The chain runs to 379 residues: Glutamate 5-kinase (379 aa).

Residue Lys-15 coordinates ATP. The substrate site is built by Ser-54, Asp-144, and Asn-156. 176 to 177 contacts ATP; that stretch reads TD. A PUA domain is found at 282–360; that stretch reads KGVILVDAGA…GEIERALGYK (79 aa).

This sequence belongs to the glutamate 5-kinase family.

It localises to the cytoplasm. It carries out the reaction L-glutamate + ATP = L-glutamyl 5-phosphate + ADP. The protein operates within amino-acid biosynthesis; L-proline biosynthesis; L-glutamate 5-semialdehyde from L-glutamate: step 1/2. Catalyzes the transfer of a phosphate group to glutamate to form L-glutamate 5-phosphate. In Anaeromyxobacter dehalogenans (strain 2CP-C), this protein is Glutamate 5-kinase.